The following is a 641-amino-acid chain: Pre-mRNA-processing factor 39 (641 aa).

The interval 1-50 is disordered; that stretch reads MEKSPEHCAEGSPSPATESAPSATEPPLPSTEPPLPSTEPPLPSTEPPLP. Low complexity predominate over residues 10–23; sequence EGSPSPATESAPSA. Positions 24 to 50 are enriched in pro residues; that stretch reads TEPPLPSTEPPLPSTEPPLPSTEPPLP. 7 HAT repeats span residues 50–82, 84–116, 118–150, 158–193, 304–336, 338–370, and 372–407; these read PPLP…YVEQ, NHLF…LEKK, NNIL…FLKE, ETSL…WETE, NFEE…FELE, GSNE…YMEN, and SVEG…QQGN.

It belongs to the PRP39 family.

The protein resides in the nucleus. In terms of biological role, involved in pre-mRNA splicing. In Xenopus laevis (African clawed frog), this protein is Pre-mRNA-processing factor 39 (prpf39).